The following is a 258-amino-acid chain: E3 ubiquitin-protein ligase RNF170 (258 aa).

Residues 1–24 (MAKYQGEVQSLKLDDDSVIEGVSD) lie on the Lumenal side of the membrane. Residues 25–45 (QVLVAVVVSFALIATLVYALF) traverse the membrane as a helical segment. Over 46–201 (RNVHQNIHPE…GGLFWMFRIR (156 aa)) the chain is Cytoplasmic. An RING-type zinc finger spans residues 87–130 (CPICLHQASFPVETNCGHLFCGACIIAYWRYGSWLGAISCPICR). A helical membrane pass occupies residues 202 to 222 (IILCLMGAFFYLISPLDFVPE). A topological domain (lumenal) is located at residue A223. Residues 224–244 (LFGILGFLDDFFVIFLLLIYI) traverse the membrane as a helical segment. At 245-258 (SIMYREVITQRLTR) the chain is on the cytoplasmic side.

As to quaternary structure, (Microbial infection) Interacts with human cytomegalovirus protein NEC2/UL50; this interaction promotes of UBA7 ubiquitination and subsequent proteasomal degradation. In terms of assembly, constitutively associated with the ERLIN1/ERLIN 2 complex. Interacts with activated ITPR1. Expressed in the spinal cord.

The protein localises to the endoplasmic reticulum membrane. The enzyme catalyses S-ubiquitinyl-[E2 ubiquitin-conjugating enzyme]-L-cysteine + [acceptor protein]-L-lysine = [E2 ubiquitin-conjugating enzyme]-L-cysteine + N(6)-ubiquitinyl-[acceptor protein]-L-lysine.. It participates in protein modification; protein ubiquitination. Functionally, E3 ubiquitin-protein ligase that plays an essential role in stimulus-induced inositol 1,4,5-trisphosphate receptor type 1 (ITPR1) ubiquitination and degradation via the endoplasmic reticulum-associated degradation (ERAD) pathway. Also involved in ITPR1 turnover in resting cells. Selectively inhibits the TLR3-triggered innate immune response by promoting the 'Lys-48'-linked polyubiquitination and degradation of TLR3. The polypeptide is E3 ubiquitin-protein ligase RNF170 (RNF170) (Homo sapiens (Human)).